Reading from the N-terminus, the 168-residue chain is Peptidyl-Lys metalloendopeptidase (168 aa).

2 cysteine pairs are disulfide-bonded: Cys6–Cys76 and Cys78–Cys98. His118 is a binding site for Zn(2+). Glu119 is an active-site residue. The Zn(2+) site is built by His122 and Asp131.

It depends on Zn(2+) as a cofactor.

Its subcellular location is the secreted. It catalyses the reaction Preferential cleavage in proteins: -Xaa-|-Lys- (in which Xaa may be Pro).. Inhibited by chelating agents such as EDTA and 1,10-phenanthroline. The sequence is that of Peptidyl-Lys metalloendopeptidase (MEP) from Pleurotus ostreatus (Oyster mushroom).